Here is a 335-residue protein sequence, read N- to C-terminus: Acetyl-coenzyme A carboxylase carboxyl transferase subunit alpha (335 aa).

Positions 48–308 (VLESKVDALR…KSLLVEELRM (261 aa)) constitute a CoA carboxyltransferase C-terminal domain.

This sequence belongs to the AccA family. As to quaternary structure, acetyl-CoA carboxylase is a heterohexamer composed of biotin carboxyl carrier protein (AccB), biotin carboxylase (AccC) and two subunits each of ACCase subunit alpha (AccA) and ACCase subunit beta (AccD).

It localises to the cytoplasm. The enzyme catalyses N(6)-carboxybiotinyl-L-lysyl-[protein] + acetyl-CoA = N(6)-biotinyl-L-lysyl-[protein] + malonyl-CoA. It functions in the pathway lipid metabolism; malonyl-CoA biosynthesis; malonyl-CoA from acetyl-CoA: step 1/1. In terms of biological role, component of the acetyl coenzyme A carboxylase (ACC) complex. First, biotin carboxylase catalyzes the carboxylation of biotin on its carrier protein (BCCP) and then the CO(2) group is transferred by the carboxyltransferase to acetyl-CoA to form malonyl-CoA. The polypeptide is Acetyl-coenzyme A carboxylase carboxyl transferase subunit alpha (Chlorobium phaeobacteroides (strain BS1)).